Consider the following 489-residue polypeptide: Kynureninase 2 (489 aa).

The span at methionine 1 to glutamine 12 shows a compositional bias: polar residues. The tract at residues methionine 1–serine 25 is disordered. Pyridoxal 5'-phosphate contacts are provided by residues leucine 149, threonine 150, phenylalanine 177–aspartate 180, aspartate 261, histidine 264, and tyrosine 286. Lysine 287 bears the N6-(pyridoxal phosphate)lysine mark. Residues tryptophan 317 and asparagine 345 each contribute to the pyridoxal 5'-phosphate site.

This sequence belongs to the kynureninase family. As to quaternary structure, homodimer. Pyridoxal 5'-phosphate serves as cofactor.

Its subcellular location is the cytoplasm. The enzyme catalyses L-kynurenine + H2O = anthranilate + L-alanine + H(+). It catalyses the reaction 3-hydroxy-L-kynurenine + H2O = 3-hydroxyanthranilate + L-alanine + H(+). It functions in the pathway amino-acid degradation; L-kynurenine degradation; L-alanine and anthranilate from L-kynurenine: step 1/1. Its pathway is cofactor biosynthesis; NAD(+) biosynthesis; quinolinate from L-kynurenine: step 2/3. Functionally, catalyzes the cleavage of L-kynurenine (L-Kyn) and L-3-hydroxykynurenine (L-3OHKyn) into anthranilic acid (AA) and 3-hydroxyanthranilic acid (3-OHAA), respectively. The polypeptide is Kynureninase 2 (Phaeosphaeria nodorum (strain SN15 / ATCC MYA-4574 / FGSC 10173) (Glume blotch fungus)).